Consider the following 883-residue polypeptide: DNA mismatch repair protein MutS (883 aa).

ATP is bound at residue 633–640 (GPNMGGKS).

Belongs to the DNA mismatch repair MutS family.

Functionally, this protein is involved in the repair of mismatches in DNA. It is possible that it carries out the mismatch recognition step. This protein has a weak ATPase activity. The polypeptide is DNA mismatch repair protein MutS (Bordetella parapertussis (strain 12822 / ATCC BAA-587 / NCTC 13253)).